Reading from the N-terminus, the 84-residue chain is Serine protease inhibitor Kazal-type 2 (84 aa).

An N-terminal signal peptide occupies residues 1–23 (MALSVLRLALLLLAVTFAASLIP). Q24 is subject to Pyrrolidone carboxylic acid. The region spanning 30–84 (KYRTPNCSQYRLPGCPRHFNPVCGSDMSTYANECTLCMKIREGGHNIKIIRNGPC) is the Kazal-like domain. Disulfide bonds link C36/C66, C44/C63, and C52/C84.

In terms of tissue distribution, expressed in epididymis (at protein level).

Its subcellular location is the secreted. The protein resides in the cytoplasmic vesicle. The protein localises to the secretory vesicle. It is found in the acrosome. As a strong inhibitor of acrosin, it is required for normal spermiogenesis. It probably hinders premature activation of proacrosin and other proteases, thus preventing the cascade of events leading to spermiogenesis defects. May be involved in the regulation of serine protease-dependent germ cell apoptosis. It also inhibits trypsin. The sequence is that of Serine protease inhibitor Kazal-type 2 (SPINK2) from Homo sapiens (Human).